Reading from the N-terminus, the 201-residue chain is Peptide deformylase (201 aa).

Residues Cys92 and His134 each coordinate Fe cation. The active site involves Glu135. His138 lines the Fe cation pocket.

It belongs to the polypeptide deformylase family. Fe(2+) is required as a cofactor.

The enzyme catalyses N-terminal N-formyl-L-methionyl-[peptide] + H2O = N-terminal L-methionyl-[peptide] + formate. Removes the formyl group from the N-terminal Met of newly synthesized proteins. Requires at least a dipeptide for an efficient rate of reaction. N-terminal L-methionine is a prerequisite for activity but the enzyme has broad specificity at other positions. This is Peptide deformylase from Rhodopirellula baltica (strain DSM 10527 / NCIMB 13988 / SH1).